Consider the following 814-residue polypeptide: MDVADAHVGQLRVRDEVGVRCQKLFLDFLEEFKEDGEIKYLKTVENLVNPDRSTLEVSFEDVENYNQTLATAIIEEYYRIFPYLCQSVSNFVRDRTSLKKSKECYVSFVDVPTRHKVRELSTSKIGTLIRISGQVVRTHPVHPELVLGTFVCLDCQTEIRDVEQQFKFTNPTICRNPVCANRRRFMLEVDKSLFIDFQKVRIQETQAELPRGCIPRSVEVILRAEMVETVQAGDRYDFTGTLIVIPDVGALQLPGAKAEIGSRHKQGDNAAEGVRGLKALGMRDLNYKMAFLACSVQVTSSRFGGTDMPMSEVTSQIMKDQMTPAEWNKVYEMSRDPRLYQNLINSLFPSIYGNDEVKRGILLMLFGGVAKTTQEKTTLRGDINVCIVGDPSTAKSQFLKQVSDFSPRAVYTSGKASSAAGLTAAVVRDEESFDFVIEAGALMLADNGICCIDEFDKMDPHDQVAIHEAMEQQTISIAKAGVRATLNARTSILAAANPIGGRYDRSKSLQQNIQLTAPIMSRFDLFFILVDECNEVVDYAIARKIVDLHSHIEHSLDQVYSREDVLRYIMFARQFKPVIQPEAMALLVENYGHLRQRDTGTTGKSTWRITVRQLESMIRLSEAMAKMECSEEVTERHVKEAYRLLNKSIIRVEQPDIHLDEEEGEENENVMDIGEETPEDTPRTNETEENDQDTPAVAKKKLTLSFEEYKNLSNMLVIHMRNEESRMESEELDREGISKTELINWYLSQVEDQLESVEELMERKVLIEKVIDRLIYHDQVIIPLKQAKLGETDQDDAGDQDVLLVVHPNYIVES.

Residues 152-179 (CLDCQTEIRDVEQQFKFTNPTICRNPVC) form a C4-type zinc finger. Residues 339-545 (LYQNLINSLF…VVDYAIARKI (207 aa)) form the MCM domain. Residues S392, T393, A394, K395, S396, and N497 each coordinate ATP. The Arginine finger motif lies at 521–524 (SRFD). R612 and E615 together coordinate ADP. Residues 656-696 (DIHLDEEEGEENENVMDIGEETPEDTPRTNETEENDQDTPA) are disordered. Over residues 659–679 (LDEEEGEENENVMDIGEETPE) the composition is skewed to acidic residues.

It belongs to the MCM family. As to quaternary structure, component of the Mcm2-7 complex. The complex forms a toroidal hexameric ring with the proposed subunit order Mcm2-Mcm6-Mcm4-Mcm7-Mcm3-Mcm5 (By simililarity). The heterodimers of Mcm4/Mcm6 and Mcm3/Mcm5 interact with Mcm2 and Mcm7.

Its subcellular location is the nucleus. The catalysed reaction is ATP + H2O = ADP + phosphate + H(+). Functionally, acts as a component of the MCM2-7 complex (MCM complex) which is the replicative helicase essential for 'once per cell cycle' DNA replication initiation and elongation in eukaryotic cells. Core component of CDC45-MCM-GINS (CMG) helicase, the molecular machine that unwinds template DNA during replication, and around which the replisome is built. The active ATPase sites in the MCM2-7 ring are formed through the interaction surfaces of two neighboring subunits such that a critical structure of a conserved arginine finger motif is provided in trans relative to the ATP-binding site of the Walker A box of the adjacent subunit. The six ATPase active sites, however, are likely to contribute differentially to the complex helicase activity. This chain is DNA replication licensing factor Mcm6, found in Anopheles gambiae (African malaria mosquito).